The following is a 148-amino-acid chain: UPF0260 protein KPK_1978 (148 aa).

The protein belongs to the UPF0260 family.

The chain is UPF0260 protein KPK_1978 from Klebsiella pneumoniae (strain 342).